The primary structure comprises 707 residues: Choline transporter-like protein 4 (707 aa).

At 1 to 32 (MGKKQKENEAYGNSAKYDPSFRGPIKNRGCTD) the chain is on the cytoplasmic side. A helical membrane pass occupies residues 33–53 (IICCVLFLVFILGYIVVGLVA). Topologically, residues 54–227 (WVYGDPRQVL…KIFEDFAQSW (174 aa)) are extracellular. Asn-67, Asn-185, Asn-195, and Asn-196 each carry an N-linked (GlcNAc...) asparagine glycan. A helical transmembrane segment spans residues 228–248 (YWILVALGVALVLSLLFILLL). Over 249 to 250 (RL) the chain is Cytoplasmic. A helical membrane pass occupies residues 251 to 271 (VAAPLVLLLIVGVLAVLAYGI). Topologically, residues 272 to 307 (YHCWQQYRELRDQGVSITQLGFTANLSAYQNVKETW) are extracellular. Residue Asn-296 is glycosylated (N-linked (GlcNAc...) asparagine). A helical transmembrane segment spans residues 308 to 328 (LAALIILAVLEGVLLLMLIFL). Residues 329–356 (RQRIRIAIALLKEASRAVGQMMSTMFYP) are Cytoplasmic-facing. The chain crosses the membrane as a helical span at residues 357–377 (LVTFVLLVICIGYWAVTALYL). Over 378–452 (ATSGQPQYVY…GILGLFWTVN (75 aa)) the chain is Extracellular. N-linked (GlcNAc...) asparagine glycosylation is found at Asn-391, Asn-403, and Asn-413. The chain crosses the membrane as a helical span at residues 453–473 (WVLALGQCVLAGAFASFYWAF). Topologically, residues 474 to 498 (HKPRDIPTFPLSSAFIRTLRYHTGS) are cytoplasmic. The chain crosses the membrane as a helical span at residues 499-519 (LAFGALILTLVQIARVILEYI). Topologically, residues 520-557 (DHKLRGSQNPVARCIICCFKCCLWCLEKFIKFLNRNAY) are extracellular. The chain crosses the membrane as a helical span at residues 558-578 (IMIAIYGKNFCVSAKNAFMLL). Over 579–594 (MRNVVRVVVLDKVTDL) the chain is Cytoplasmic. Residues 595 to 615 (LLFFGKLLVVGGVGVLSFFFF) form a helical membrane-spanning segment. Residues 616–635 (SGRIKGLGKDFKNPDLNYYW) lie on the Extracellular side of the membrane. Residues 636-656 (LPIMTSIMGAYVIASGFFSVF) form a helical membrane-spanning segment. The Cytoplasmic portion of the chain corresponds to 657 to 707 (GMCVDTLFLCFLEDLERNDGSQERPYYMPKALLKILGKKNEVPTGGKNRKK).

Belongs to the CTL (choline transporter-like) family. Post-translationally, N-glycosylated; N-glycosylation of Asn-67 and Asn-391 is required for a proper thiamine pyrophosphate uptake. Highly expressed in intestine, kidney and stomach. Also expressed in testis and lung.

The protein resides in the membrane. The protein localises to the apical cell membrane. The enzyme catalyses choline(out) + n H(+)(in) = choline(in) + n H(+)(out). It catalyses the reaction thiamine diphosphate(out) = thiamine diphosphate(in). Choline transporter that plays a role in the choline-acetylcholine system and is required to the efferent innervation of hair cells in the olivocochlear bundle for the maintenance of physiological function of outer hair cells and the protection of hair cells from acoustic injury. Also described as a thiamine pyrophosphate transporter in colon, may mediate the absorption of microbiota-generated thiamine pyrophosphate and contribute to host thiamine (vitamin B1) homeostasis. This chain is Choline transporter-like protein 4, found in Rattus norvegicus (Rat).